Consider the following 305-residue polypeptide: Tyrosine recombinase XerC (305 aa).

The 93-residue stretch at 1–93 (MVLDGFAAHF…SWRQYCVWLV (93 aa)) folds into the Core-binding (CB) domain. A Tyr recombinase domain is found at 114–294 (RVPKALPQEW…DFDHIARLYD (181 aa)). Catalysis depends on residues arginine 155, lysine 179, histidine 246, arginine 249, and histidine 272. The O-(3'-phospho-DNA)-tyrosine intermediate role is filled by tyrosine 281.

Belongs to the 'phage' integrase family. XerC subfamily. In terms of assembly, forms a cyclic heterotetrameric complex composed of two molecules of XerC and two molecules of XerD.

The protein resides in the cytoplasm. Functionally, site-specific tyrosine recombinase, which acts by catalyzing the cutting and rejoining of the recombining DNA molecules. The XerC-XerD complex is essential to convert dimers of the bacterial chromosome into monomers to permit their segregation at cell division. It also contributes to the segregational stability of plasmids. The polypeptide is Tyrosine recombinase XerC (Neisseria meningitidis serogroup C (strain 053442)).